Consider the following 138-residue polypeptide: 10 kDa chaperonin 1, chloroplastic (138 aa).

Residues 1 to 61 (MASSFITVPK…VPQADRVLVR (61 aa)) constitute a chloroplast transit peptide. Residues 50–137 (KVVPQADRVL…CKESDLLAIV (88 aa)) form a cpn-10 domain region.

This sequence belongs to the GroES chaperonin family. Expressed at low levels in germinating seeds, seedlings, rosettes leaves, flowers and siliques.

It localises to the plastid. The protein localises to the chloroplast. In terms of biological role, functions as a co-chaperone for protein folding in chloroplasts. The chain is 10 kDa chaperonin 1, chloroplastic from Arabidopsis thaliana (Mouse-ear cress).